The following is a 932-amino-acid chain: Transcription initiation factor TFIID subunit 3 (932 aa).

Disordered regions lie at residues 130-201, 213-347, 403-465, and 480-579; these read PIVS…LSTK, REPL…PSAM, REPD…DNSW, and LGAP…PWRE. The segment covering 158 to 171 has biased composition (acidic residues); that stretch reads LEEDDEMEEEEVIN. 4 positions are modified to phosphoserine: Ser-183, Ser-199, Ser-229, and Ser-243. Lys-266 is modified (N6-acetyllysine). Polar residues predominate over residues 266 to 283; the sequence is KSFTPKTKTKASSPGQKT. Residues Ser-291, Ser-297, and Ser-301 each carry the phosphoserine modification. The segment covering 408–423 has biased composition (low complexity); that stretch reads FEFSSGSESEGDTFTS. A compositionally biased stretch (polar residues) spans 436 to 446; that stretch reads KASTSSNNFTK. Residues 447–461 show a composition bias toward low complexity; that stretch reads SLATPLPLSSGTSSS. Residue Thr-502 is modified to Phosphothreonine. Basic and acidic residues predominate over residues 505 to 515; the sequence is PLHKGYEEKAK. A compositionally biased stretch (basic residues) spans 524–538; the sequence is KKLKKELKTKLKKKE. Over residues 539-579 the composition is skewed to basic and acidic residues; it reads KQRDRERERERNKERSKEKDKMREREKEKEAGKELKYPWRE. A Glycyl lysine isopeptide (Lys-Gly) (interchain with G-Cter in SUMO2) cross-link involves residue Lys-582. Residues 607–657 are disordered; sequence KDGIVRREREKHKDKKKDRERSKREKDKRERERLKEKNREDKIKAPPTQLV. A compositionally biased stretch (basic and acidic residues) spans 623–650; the sequence is KDRERSKREKDKRERERLKEKNREDKIK. Residue Ser-669 is modified to Phosphoserine. Residues 681–746 form a disordered region; it reads AFSPMLPEKL…EKEKEKHKHE (66 aa). Positions 689–702 are enriched in basic and acidic residues; sequence KLFEEKEKPKEKER. The span at 703–714 shows a compositional bias: basic residues; that stretch reads KKDKKEKKKKKE. A compositionally biased stretch (basic and acidic residues) spans 715-740; the sequence is KEKEKEKKEREREKERREREKREKEK. A Glycyl lysine isopeptide (Lys-Gly) (interchain with G-Cter in SUMO2) cross-link involves residue Lys-749. A Phosphoserine modification is found at Ser-758. An N6-acetyllysine modification is found at Lys-779. The PHD-type zinc-finger motif lies at 867-917; it reads IWICPGCNKPDDGSPMIGCDDCDDWYHWPCVGIMAAPPEEMQWFCPKCANK.

Belongs to the TAF3 family. Component of the TFIID basal transcription factor complex, composed of TATA-box-binding protein TBP, and a number of TBP-associated factors (TAFs), including TAF1, TAF2, TAF3, TAF4, TAF5, TAF6, TAF7, TAF8, TAF9, TAF10, TAF11, TAF12 and TAF13. Interacts with TAF10 via histone fold. Interacts with TAF13, TBP, SAP130 and GCN5L2. Interacts with TBPL2.

The protein resides in the nucleus. In terms of biological role, the TFIID basal transcription factor complex plays a major role in the initiation of RNA polymerase II (Pol II)-dependent transcription. TFIID recognizes and binds promoters with or without a TATA box via its subunit TBP, a TATA-box-binding protein, and promotes assembly of the pre-initiation complex (PIC). The TFIID complex consists of TBP and TBP-associated factors (TAFs), including TAF1, TAF2, TAF3, TAF4, TAF5, TAF6, TAF7, TAF8, TAF9, TAF10, TAF11, TAF12 and TAF13. The TFIID complex structure can be divided into 3 modules TFIID-A, TFIID-B, and TFIID-C. TAF3 forms the TFIID-A module together with TAF5 and TBP. Required in complex with TBPL2 for the differentiation of myoblasts into myocytes. The TAF3-TBPL2 complex replaces TFIID at specific promoters at an early stage in the differentiation process. In Mus musculus (Mouse), this protein is Transcription initiation factor TFIID subunit 3 (Taf3).